The primary structure comprises 228 residues: 7-cyano-7-deazaguanine synthase (228 aa).

9-19 (LSGGPDSTTVL) is a binding site for ATP. 4 residues coordinate Zn(2+): Cys193, Cys203, Cys206, and Cys209.

It belongs to the QueC family. Zn(2+) serves as cofactor.

The enzyme catalyses 7-carboxy-7-deazaguanine + NH4(+) + ATP = 7-cyano-7-deazaguanine + ADP + phosphate + H2O + H(+). It participates in purine metabolism; 7-cyano-7-deazaguanine biosynthesis. Functionally, catalyzes the ATP-dependent conversion of 7-carboxy-7-deazaguanine (CDG) to 7-cyano-7-deazaguanine (preQ(0)). The chain is 7-cyano-7-deazaguanine synthase from Rickettsia rickettsii (strain Iowa).